The primary structure comprises 140 residues: Large-conductance mechanosensitive channel (140 aa).

The next 2 membrane-spanning stretches (helical) occupy residues 16–36 (VIDL…VTAL) and 84–104 (INTV…VKLI).

Belongs to the MscL family. As to quaternary structure, homopentamer.

It localises to the cell inner membrane. Channel that opens in response to stretch forces in the membrane lipid bilayer. May participate in the regulation of osmotic pressure changes within the cell. This Xanthomonas oryzae pv. oryzae (strain MAFF 311018) protein is Large-conductance mechanosensitive channel.